We begin with the raw amino-acid sequence, 435 residues long: Ras association domain-containing protein 9 (435 aa).

The segment at 1 to 22 (MAPFGRNLLKTRHKNRSPTKDM) is disordered. One can recognise a Ras-associating domain in the interval 25 to 119 (EEKEIVVWVC…MQFVLVKADA (95 aa)). Residues 195–290 (HTIHQQVKRM…DKLSAEIEKE (96 aa)) are a coiled coil. The tract at residues 380-435 (NRAKESEVPSSNGEIPPFTQRVFSNYTNDTDSDTGISSNHSQDSETTVGDVVLLST) is disordered. A compositionally biased stretch (polar residues) spans 400–426 (RVFSNYTNDTDSDTGISSNHSQDSETT).

As to quaternary structure, interacts with PAM.

Its subcellular location is the endosome. Its function is as follows. May play a role in regulating vesicuar trafficking in cells. The sequence is that of Ras association domain-containing protein 9 (RASSF9) from Homo sapiens (Human).